The primary structure comprises 420 residues: Zinc finger protein 362 (420 aa).

3 disordered regions span residues methionine 1–proline 28, arginine 54–glutamine 80, and valine 115–arginine 155. Positions serine 121–serine 154 are enriched in low complexity. Threonine 162 carries the post-translational modification Phosphothreonine. Residues threonine 178 to proline 202 are disordered. A Glycyl lysine isopeptide (Lys-Gly) (interchain with G-Cter in SUMO2) cross-link involves residue lysine 198. C2H2-type zinc fingers lie at residues tyrosine 227–histidine 249, histidine 255–histidine 277, tyrosine 283–histidine 305, tyrosine 311–histidine 335, tyrosine 341–histidine 363, and tyrosine 371–histidine 393. A Phosphoserine modification is found at serine 404.

It belongs to the krueppel C2H2-type zinc-finger protein family.

The protein localises to the nucleus. Functionally, may be involved in transcriptional regulation. In Homo sapiens (Human), this protein is Zinc finger protein 362 (ZNF362).